Consider the following 301-residue polypeptide: UstYa family oxidase phomYd (301 aa).

The segment at 1–26 (MEKFFSPSRHNYADLSPTDVPASEES) is disordered. Residues 47–69 (VLVNRLLAASTVALVMVSLWLGW) traverse the membrane as a helical segment. 2 consecutive short sequence motifs (HXXHC) follow at residues 189-194 (THSVHC) and 218-222 (HTDHC). N-linked (GlcNAc...) asparagine glycosylation is present at Asn-275.

The protein belongs to the ustYa family.

It localises to the membrane. It participates in mycotoxin biosynthesis. In terms of biological role, ustYa family oxidase; part of the gene cluster that mediates the biosynthesis of the phomopsins, a group of hexapeptide mycotoxins which infects lupins and causes lupinosis disease in livestock. Within the pathway, phomYd catalyzes the desaturation of the Asp moiety into 2,3-dehydroaspartic acid (dAsp). The pathway starts with the processing of the precursor phomA by several endopeptidases including kexin proteases as well as the cluster-specific S41 family peptidase phomP1 and the oligopeptidase phomG to produce 10 identical copies of the hexapeptide Tyr-Val-Ile-Pro-Ile-Asp. After being excised from the precursor peptide, the core peptides are cyclized and modified post-translationally by enzymes encoded within the gene cluster. The timing and order of proteolysis of the phomA precursor and PTMs are still unknown. Two tyrosinase-like enzymes, phomQ1 and phomQ2, catalyze the chlorination and hydroxylation of Tyr, respectively. PhomYb, is proposed to be involved in the construction of the macrocyclic structure. The other 4 ustYa family proteins may be involved in PTMs that generate the unique structure of phomopsin A. PhomYa is required for the hydroxylation of C-beta of Tyr. PhomYc, phomYd, and phomYe are responsible for the biosynthesis of 2,3-dehydroisoleucine (dIle), 2,3-dehydroaspartic acid (dAsp), and 3,4-dehydroproline (dPro), respectively. While dIle formation by phomYc is indispensable for the installation of dAsp by phomYd, the order of the other PTMs have not been elucidated yet. Most of the biosynthetic enzymes likely have broad substrate specificity, and thus, there might be a metabolic grid from a precursor to phomopsin A. The enzyme(s) responsible for the biosynthesis of 3,4-dehydrovaline (dVal) have also not been identified yet. Finally, phomM acts as an S-adenosylmethionine-dependent alpha-N-methyltransferase that catalyzes two successive N-methylation reactions, converting N-desmethyl-phomopsin A to phomopsin A and phomopsin A further to an N,N-dimethylated congener called phomopsin E. This is UstYa family oxidase phomYd from Diaporthe leptostromiformis (Lupinosis disease fungus).